Reading from the N-terminus, the 480-residue chain is UDP-glucose 6-dehydrogenase 4 (480 aa).

Residues 8–13, aspartate 33, arginine 38, 86–90, 127–128, and glutamate 161 contribute to the NAD(+) site; these read GAGYVG, VNTPT, and ST. Residues 157–161, 216–223, and 256–269 each bind substrate; these read EFLAE, KLAANAFL, and RIGPKFLNASVGFG. The active-site Nucleophile is cysteine 272. 272–275 is a binding site for NAD(+); it reads CFQK. Position 334 to 335 (334 to 335) interacts with substrate; it reads FK. An NAD(+)-binding site is contributed by arginine 342. Residue serine 393 is modified to Phosphoserine. Arginine 447 contributes to the substrate binding site.

This sequence belongs to the UDP-glucose/GDP-mannose dehydrogenase family.

The enzyme catalyses UDP-alpha-D-glucose + 2 NAD(+) + H2O = UDP-alpha-D-glucuronate + 2 NADH + 3 H(+). It functions in the pathway nucleotide-sugar biosynthesis; UDP-alpha-D-glucuronate biosynthesis; UDP-alpha-D-glucuronate from UDP-alpha-D-glucose: step 1/1. Functionally, involved in the biosynthesis of UDP-glucuronic acid (UDP-GlcA), providing nucleotide sugars for cell-wall polymers. The polypeptide is UDP-glucose 6-dehydrogenase 4 (UGD4) (Oryza sativa subsp. japonica (Rice)).